The following is a 106-amino-acid chain: Oncosphere antigen B (106 aa).

A Fibronectin type-III domain is found at 11–106; sequence LPQHFRWSQV…QSELRSMCIK (96 aa).

The protein is Oncosphere antigen B (ONCB) of Hydatigena taeniaeformis (Feline tapeworm).